A 79-amino-acid polypeptide reads, in one-letter code: MSPYSGSVRRLLDSWPGKKRFGVYRFLPLFFLLGAGLEFSMINWTVGETNFYRTFKRRQAKNYVEEQQHLQARAANNTN.

Over 1–20 (MSPYSGSVRRLLDSWPGKKR) the chain is Mitochondrial matrix. Residues 21–43 (FGVYRFLPLFFLLGAGLEFSMIN) form a helical membrane-spanning segment. Over 44 to 79 (WTVGETNFYRTFKRRQAKNYVEEQQHLQARAANNTN) the chain is Mitochondrial intermembrane.

This sequence belongs to the UQCC5 family. In terms of assembly, interacts with respiratory complex III components Uqcc1 and RFeSP; the interactions are probably involved in the assembly and stability of the mitochondrial ubiquinol-cytochrome c reductase complex. Interacts with sloth2; the interaction stabilizes both components. Expressed in the brain.

It localises to the mitochondrion inner membrane. The protein resides in the mitochondrion. Functionally, required for the assembly and stability of the mitochondrial ubiquinol-cytochrome c reductase complex (complex III (CIII) or cytochrome b-c1 complex), a multisubunit transmembrane complex that is part of the mitochondrial electron transport chain (ETC) which drives oxidative phosphorylation. In Drosophila melanogaster (Fruit fly), this protein is Ubiquinol-cytochrome c reductase complex assembly factor 5.